Here is a 427-residue protein sequence, read N- to C-terminus: Lipophilic envelope-spanning tunnel protein A (427 aa).

Topologically, residues 1 to 75 are cytoplasmic; the sequence is MALNTPQITP…LTRLAAMAFT (75 aa). Residues 76–96 form a helical membrane-spanning segment; it reads MLLLMPFAWGEPLLHIWLLGI. Over 97–120 the chain is Periplasmic; sequence RIDANVMQGIWQMTKQGDAITGSM. Residues 121–141 form a helical membrane-spanning segment; it reads VFFCVIGAPLILVTSIAYLWF. At 142–269 the chain is on the cytoplasmic side; sequence GNRLGMNLRP…RHSLQKCWAA (128 aa). A helical transmembrane segment spans residues 270–290; it reads LLASIVLLLPANLLPISIIYL. Topologically, residues 291–310 are periplasmic; that stretch reads NGGRQEDTILSGIMSLASSN. A helical transmembrane segment spans residues 311–331; it reads IAVAGIVFIASILVPFTKVIV. At 332–350 the chain is on the cytoplasmic side; it reads MFTLLLSIHFKCQQGLRTR. Residues 351-371 form a helical membrane-spanning segment; the sequence is ILLLRMVTWIGRWSMLDLFVI. The Periplasmic segment spans residues 372-382; that stretch reads SLTMSLINRDQ. Residues 383–403 form a helical membrane-spanning segment; the sequence is ILAFTMGPAAFYFGAAVILTI. The Cytoplasmic segment spans residues 404–427; the sequence is LAVEWLDSRLLWDAHESGNARFDD.

This sequence belongs to the PqiA family. As to quaternary structure, may interact with LetB in the inner membrane.

The protein resides in the cell inner membrane. Could be part, together with LetB, of a system that transports lipids between the inner membrane and the outer membrane. Contributes to membrane integrity. The polypeptide is Lipophilic envelope-spanning tunnel protein A (Escherichia coli (strain K12)).